The primary structure comprises 300 residues: Merozoite surface protein 2 (300 aa).

A signal peptide spans 1 to 20; the sequence is MKVIKTLSIINFFIFVTFNI. Residues Asn22 and Asn36 are each glycosylated (N-linked (GlcNAc...) asparagine). The segment at 44-226 is polymorphic region; sequence EESKPPTGAV…EQTESPELQS (183 aa). One copy of the 1; inverted repeat lies at 51 to 58; that stretch reads GAVAGSGA. Residues 51 to 74 are 7 X 8 AA tandem repeats of G-S-G-A-G-A-V-A; it reads GAVAGSGAGAGSGAGAVAGSGAGA. A run of 5 repeats spans residues 61 to 68, 69 to 76, 77 to 84, 85 to 92, and 93 to 100. Residues 103–110 form a 7; inverted repeat; that stretch reads GAVAGSGA. Residues 111–261 are disordered; the sequence is GNGANPGADA…DSQKECTDGN (151 aa). Residues 124–148 show a composition bias toward low complexity; it reads PSTPATTTTTTTTNDAEASTSTSSE. Positions 149–165 are enriched in basic and acidic residues; sequence NRNHNNAETNPKGKGEV. 2 stretches are compositionally biased toward polar residues: residues 167–193 and 200–228; these read KPNQANKETQNNSNVQQDSQTKSNVPR and KSPTAQPEQAENSAPTAEQTESPELQSAP. Asn177 carries an N-linked (GlcNAc...) asparagine glycan. An N-linked (GlcNAc...) asparagine glycan is attached at Asn249. Cys257 and Cys265 are disulfide-bonded. 2 N-linked (GlcNAc...) asparagine glycosylation sites follow: Asn273 and Asn274. Asn274 carries GPI-anchor amidated asparagine lipidation. A propeptide spans 275–300 (removed in mature form); the sequence is SSNIASINKFVVLISATLVLSFAIFI.

Its subcellular location is the cell membrane. May play a role in the merozoite attachment to the erythrocyte. The chain is Merozoite surface protein 2 from Plasmodium falciparum (isolate mad71 / Papua New Guinea).